Here is a 128-residue protein sequence, read N- to C-terminus: Small ribosomal subunit protein eS8 (128 aa).

Belongs to the eukaryotic ribosomal protein eS8 family. Part of the 30S ribosomal subunit.

This is Small ribosomal subunit protein eS8 from Methanococcus maripaludis (strain C7 / ATCC BAA-1331).